The primary structure comprises 176 residues: Replication restart protein PriC (176 aa).

Belongs to the PriC family. In terms of assembly, component of the replication restart primosome, which is composed of PriA, PriB, PriC, DnaB and DnaT; DnaG primase associates transiently with this complex. Interacts with the C-terminus of SSB; this interaction is required to load the main replicative helicase onto substrate replication forks. Interacts with helicase DnaB alone and in the DnaB-DnaC complex, probably 1:1 binding with DnaB. Interacts with DnaT.

Involved in the restart of stalled replication forks, which reloads the DnaB replicative helicase on sites other than the origin of replication. Recognizes abandoned replication forks and remodels DNA single-stranded binding protein (SSB) on ssDNA to uncover a loading site for DnaB. There are several restart pathways, the PriA-PriC pathway is a minor restart pathway. Part of the minor PriC-Rep pathway for restart of stalled replication forks, which has a different substrate specificity than PriA. Part of the major restart pathway with PriA, PriB, DnaB, DnaT and DnaG primase. priB and priC have redundant roles in the cell. Binds 7-9 nucleotides of single-stranded (ss)DNA. This Klebsiella pneumoniae subsp. pneumoniae (strain ATCC 700721 / MGH 78578) protein is Replication restart protein PriC.